The primary structure comprises 627 residues: Neutral endopeptidase (627 aa).

A Peptidase M13 domain is found at 1–627 (MTRIQDDLFA…RAPENRLKIW (627 aa)). Histidine 475 is a binding site for Zn(2+). Residue glutamate 476 is part of the active site. 2 residues coordinate Zn(2+): histidine 479 and glutamate 535. The active-site Proton donor is aspartate 539.

The protein belongs to the peptidase M13 family. As to quaternary structure, monomer. Zn(2+) is required as a cofactor.

Its subcellular location is the cytoplasm. In terms of biological role, endopeptidase with broad substrate specificity for several oligopeptides. The polypeptide is Neutral endopeptidase (pepO) (Lactococcus lactis subsp. cremoris (Streptococcus cremoris)).